A 1205-amino-acid chain; its full sequence is Transcriptional-regulating factor 1 (1205 aa).

Disordered stretches follow at residues 201–226, 270–317, 332–351, 390–500, 527–583, and 601–629; these read YQQVPQQPHPGFTGGLPKPALPVGQH, YPQP…QRQS, QHLQEQQQPSMHLQPPSYHR, PQSH…QTKG, LNGH…PEAE, and PKPSSQGFTNSVAATPAARDKPASSMSDD. 2 stretches are compositionally biased toward low complexity: residues 291–317 and 332–342; these read QQQQQPQQIRPSPPQQQQQLQLQQRQS and QHLQEQQQPSM. 3 stretches are compositionally biased toward polar residues: residues 406 to 417, 437 to 447, and 487 to 498; these read KTYSSDRQTPAM, SEMTRVTSTLP, and QSGSPESSSGQT. Residue S490 is modified to Phosphoserine. The segment at 512–534 adopts a C2H2-type 1 zinc-finger fold; sequence LTCSICLKEFKSLPALNGHMRSH. Over residues 551-579 the composition is skewed to pro residues; it reads APPPQPQPQPQPQQPLPPPPPPPPPPQLP. The span at 604 to 613 shows a compositional bias: polar residues; it reads SSQGFTNSVA. Residues K639 and K646 each carry the N6-acetyllysine modification. T773 is modified (phosphothreonine). Residues 785-876 form the ELM2 domain; the sequence is PRINIGLRFQ…ATLEMLLLRK (92 aa). Positions 891–942 constitute an SANT domain; that stretch reads AGSDKWTSLERKLFNKALATYSKDFIFVQKMVKSKTVAQCVEYYYTWKKIMR. A compositionally biased stretch (acidic residues) spans 956 to 975; it reads DDCMTSEEEEEAEEEEEDPE. Disordered regions lie at residues 956–1016 and 1043–1087; these read DDCM…QQPS and HGGT…GETD. T960 is subject to Phosphothreonine. Phosphoserine is present on S961. The span at 976–990 shows a compositional bias: basic and acidic residues; that stretch reads EDRKSIKEEESEVAK. The C2H2-type 2 zinc finger occupies 1019–1043; that stretch reads FICEMPNCGAVFSSRQALNGHARIH. Positions 1072-1086 are enriched in low complexity; sequence SVKSSPSHSTTSGET. The segment at 1092–1114 adopts a C2H2-type 3 zinc-finger fold; the sequence is FPCKECGKVFFKIKSRNAHMKTH.

In terms of assembly, interacts with CREBBP and EP300. Interacts with DNTTIP1 and DNTT. As to expression, highly expressed in kidney, lung and brain. In the brain, expression was seen in the basal ganglia, hippocampus, piriform cortex, cerebral cortex, ventromedial nucleus of the hypothalamus and the dorsal and superior central nuclei of the raphe.

The protein localises to the nucleus. Its function is as follows. Binds DNA and activates transcription of CYP11A1. Interaction with CREBBP and EP300 results in a synergistic transcriptional activation of CYP11A1. This is Transcriptional-regulating factor 1 (Trerf1) from Mus musculus (Mouse).